The sequence spans 432 residues: Adenylosuccinate synthetase (432 aa).

GTP-binding positions include 12–18 (GDEGKGK) and 40–42 (GHT). Residue Asp-13 is the Proton acceptor of the active site. The Mg(2+) site is built by Asp-13 and Gly-40. Residues 13-16 (DEGK), 38-41 (NAGH), Thr-132, Arg-146, Gln-226, Thr-241, and Arg-305 each bind IMP. The active-site Proton donor is the His-41. Residue 301 to 307 (VVTGRKR) participates in substrate binding. GTP is bound by residues Arg-307, 333-335 (KLD), and 415-417 (STS).

This sequence belongs to the adenylosuccinate synthetase family. In terms of assembly, homodimer. Mg(2+) serves as cofactor.

It is found in the cytoplasm. The catalysed reaction is IMP + L-aspartate + GTP = N(6)-(1,2-dicarboxyethyl)-AMP + GDP + phosphate + 2 H(+). It functions in the pathway purine metabolism; AMP biosynthesis via de novo pathway; AMP from IMP: step 1/2. Plays an important role in the de novo pathway of purine nucleotide biosynthesis. Catalyzes the first committed step in the biosynthesis of AMP from IMP. This Mesorhizobium japonicum (strain LMG 29417 / CECT 9101 / MAFF 303099) (Mesorhizobium loti (strain MAFF 303099)) protein is Adenylosuccinate synthetase.